The primary structure comprises 250 residues: MRIVGIIPARYQSSRFPGKPLVDILGKPMIRHVYERSARAGCLDRLIVATDDARIAAAVAGFGGEALLTRADHASGTDRLAEAARLLELDGADIVVNIQGDEPLVNHRMIEALVEALQCDRHCPMATLAFPSESLQDYNNPNVVKVVLDRGLRALYFSRAPIPFVRDGAADAPAFLKHLGFYAYSASFLQTFSRLPPGRLEGLEKLEQLRALEHGYGIRVALSPVDTRGVDTPEDLEAVVPVLAQDAVGA.

It belongs to the KdsB family.

Its subcellular location is the cytoplasm. The enzyme catalyses 3-deoxy-alpha-D-manno-oct-2-ulosonate + CTP = CMP-3-deoxy-beta-D-manno-octulosonate + diphosphate. The protein operates within nucleotide-sugar biosynthesis; CMP-3-deoxy-D-manno-octulosonate biosynthesis; CMP-3-deoxy-D-manno-octulosonate from 3-deoxy-D-manno-octulosonate and CTP: step 1/1. It participates in bacterial outer membrane biogenesis; lipopolysaccharide biosynthesis. Functionally, activates KDO (a required 8-carbon sugar) for incorporation into bacterial lipopolysaccharide in Gram-negative bacteria. This chain is 3-deoxy-manno-octulosonate cytidylyltransferase, found in Syntrophobacter fumaroxidans (strain DSM 10017 / MPOB).